A 360-amino-acid polypeptide reads, in one-letter code: Phospho-N-acetylmuramoyl-pentapeptide-transferase (360 aa).

10 consecutive transmembrane segments (helical) span residues 27 to 47 (IVSLLTALFLSLWMGPRLIAW), 72 to 92 (PTMGGLMILTSITISVLMWAY), 94 to 114 (SNPYVWCVLFVLVGYGIVGFI), 132 to 152 (WKYFWQSVIALAVAFTMFAVG), 168 to 188 (IMPQLGLWYVLLAYFVIVGTS), 199 to 219 (GLAIMPTVFVAAGLALVAWAT), 235 to 255 (FAGELVVVCTAIVGAGLGFLW), 263 to 283 (VFMGDVGSLALGGALGTIAVL), 288 to 308 (FLLLIMGGVFVVETLSVILQV), and 338 to 358 (VIVRFWIISLMLVLIGLATLK).

It belongs to the glycosyltransferase 4 family. MraY subfamily. Mg(2+) is required as a cofactor.

The protein resides in the cell inner membrane. The catalysed reaction is UDP-N-acetyl-alpha-D-muramoyl-L-alanyl-gamma-D-glutamyl-meso-2,6-diaminopimeloyl-D-alanyl-D-alanine + di-trans,octa-cis-undecaprenyl phosphate = di-trans,octa-cis-undecaprenyl diphospho-N-acetyl-alpha-D-muramoyl-L-alanyl-D-glutamyl-meso-2,6-diaminopimeloyl-D-alanyl-D-alanine + UMP. Its pathway is cell wall biogenesis; peptidoglycan biosynthesis. In terms of biological role, catalyzes the initial step of the lipid cycle reactions in the biosynthesis of the cell wall peptidoglycan: transfers peptidoglycan precursor phospho-MurNAc-pentapeptide from UDP-MurNAc-pentapeptide onto the lipid carrier undecaprenyl phosphate, yielding undecaprenyl-pyrophosphoryl-MurNAc-pentapeptide, known as lipid I. This is Phospho-N-acetylmuramoyl-pentapeptide-transferase from Sodalis glossinidius (strain morsitans).